The primary structure comprises 779 residues: Tricorn protease-interacting factor F3 (779 aa).

Substrate contacts are provided by residues Glu-102 and 231–235 (GAMEN). Position 266 (His-266) interacts with Zn(2+). Catalysis depends on Glu-267, which acts as the Proton acceptor. Zn(2+) is bound by residues His-270 and Glu-289.

Belongs to the peptidase M1 family. In terms of assembly, part of the tricorn proteolytic complex. Zn(2+) is required as a cofactor.

Its subcellular location is the cytoplasm. Its function is as follows. Proteases F1, F2 and F3 degrade oligopeptides produced by Tricorn (themselves probably produced by the proteasome), yielding free amino acids. This is Tricorn protease-interacting factor F3 (trf3) from Thermoplasma volcanium (strain ATCC 51530 / DSM 4299 / JCM 9571 / NBRC 15438 / GSS1).